The sequence spans 336 residues: Fimbrial adhesin PapGII (336 aa).

Positions 1-20 (MKKWFPALLFSLCVSGESSA) are cleaved as a signal peptide. 2 cysteine pairs are disulfide-bonded: Cys-64-Cys-138 and Cys-217-Cys-249. D-galactose-binding positions include Glu-79 and 124–127 (GYKW).

This sequence belongs to the adhesin PapG family.

Its subcellular location is the secreted. The protein resides in the fimbrium. Its function is as follows. Tip adhesin component of type P pili that plays a critical role in kidney infection through targeted interaction with the globoseries glycolipids containing the Gal-alpha(1-4)-Gal disaccharide present on uroepithelial cells. In turn, transcriptionally regulates host gene expression in kidney cells, leading to inflammatory pathway activation and renal tissue damage. Acts thereby as key determinant of invasive uropathogenic E.coli (UPEC), which cause pyelonephritis and urinary-source bacteremia. The sequence is that of Fimbrial adhesin PapGII from Escherichia coli.